The primary structure comprises 410 residues: tRNA-guanine(15) transglycosylase (410 aa).

Aspartate 87 serves as the catalytic Nucleophile. Substrate-binding residues include aspartate 122 and glycine 187.

The protein belongs to the archaeosine tRNA-ribosyltransferase family. Zn(2+) serves as cofactor.

It carries out the reaction guanosine(15) in tRNA + 7-cyano-7-deazaguanine = 7-cyano-7-carbaguanosine(15) in tRNA + guanine. Its pathway is tRNA modification; archaeosine-tRNA biosynthesis. Its function is as follows. Exchanges the guanine residue with 7-cyano-7-deazaguanine (preQ0) at position 15 in the dihydrouridine loop (D-loop) of archaeal tRNAs. The protein is tRNA-guanine(15) transglycosylase of Nanoarchaeum equitans (strain Kin4-M).